Consider the following 261-residue polypeptide: MRLPEQPGDGKPENETKGDQETPERGEEPRRSPAPDFPTWEKMPFHHVTAGLLYKGNYLNRSLSAGSDSEQLANISVEELDEIREAFRVLDRDGNGFISKQELGMAMRSLGYMPSEVELAIIMQRLDMDGDGQVDFDEFMTILGPKLVSSEGRDGFLGNTIDSIFWQFDMQRVTLEELKHILYHAFRDHLTMKDIENIIINEEESLNETSGNCQTEFEGVHSQKQNRQTCVRKSLICAFAMAFIISVMLIAANQILRSGME.

Residues 1-41 (MRLPEQPGDGKPENETKGDQETPERGEEPRRSPAPDFPTWE) form a disordered region. Over 1–234 (MRLPEQPGDG…QNRQTCVRKS (234 aa)) the chain is Cytoplasmic. A compositionally biased stretch (basic and acidic residues) spans 8 to 33 (GDGKPENETKGDQETPERGEEPRRSP). EF-hand domains are found at residues 78–113 (EELDEIREAFRVLDRDGNGFISKQELGMAMRSLGYM) and 114–149 (PSEVELAIIMQRLDMDGDGQVDFDEFMTILGPKLVS). Positions 91, 93, 95, 102, 127, 129, 131, 133, and 138 each coordinate Ca(2+). The helical; Anchor for type IV membrane protein transmembrane segment at 235–255 (LICAFAMAFIISVMLIAANQI) threads the bilayer. Residues 256 to 261 (LRSGME) are Extracellular-facing.

As to quaternary structure, interacts with PI4KB. This binding competes with FREQ/NCS1 binding in a calcium-dependent manner. As to expression, brain-specific. High expression in the cerebellum, hippocampus, and cortex.

Its subcellular location is the golgi apparatus. It localises to the trans-Golgi network membrane. The protein localises to the cytoplasm. The protein resides in the perinuclear region. It is found in the cell membrane. Its function is as follows. Negatively regulates Golgi-to-plasma membrane trafficking by interacting with PI4KB and inhibiting its activity. May play a role in the physiology of neurons and is potentially important in memory and learning. In Mus musculus (Mouse), this protein is Calcium-binding protein 8 (Caln1).